Reading from the N-terminus, the 825-residue chain is Osmosensitive cation channel TMEM63C (825 aa).

Over 1 to 50 (MAFESWPAGGVRPVEELDVRSFLMEENSTAERCYRSHSRSSVLQGLPFGG) the chain is Extracellular. A helical membrane pass occupies residues 51–75 (VPTVLAINVVLWLILLLIFSCLRKA). At 76 to 141 (AWDYGRLALL…KDEEIRSKCG (66 aa)) the chain is on the cytoplasmic side. The segment at 98 to 117 (EQSEKEKTPSDSSPSDSETK) is disordered. A helical membrane pass occupies residues 142 to 174 (IDAVTYLSFQRHIILLMMVVCLLSLTIILPVNL). At 175 to 198 (SGNLLGDNPENFGRTTVVNVPAQN) the chain is on the extracellular side. Residues 199-223 (IFLWLHSIFALLYFVITVLCMAHHS) form a helical membrane-spanning segment. Over 224-418 (SRLEYREDEK…IIWENLSVCG (195 aa)) the chain is Cytoplasmic. Residues 419-448 (PRWWLRCILLNILLFLLLFFLTTPAIIVNT) form a helical membrane-spanning segment. Residues 449–463 (MDKFNVTRPVESLRN) lie on the Extracellular side of the membrane. A helical transmembrane segment spans residues 464–493 (PVITQFFPTLLLWAFSILLPFIVYYSSFFE). Residues 494–497 (YHWT) are Cytoplasmic-facing. The helical transmembrane segment at 498–534 (RSGENQVTMHKCFLLLVFMVIILPSLGLSSLNLFFRW) threads the bilayer. Residues 535-557 (LFDVRFLDETDVKFQCVFLPDNG) lie on the Extracellular side of the membrane. A helical transmembrane segment spans residues 558–590 (AFFVNYVITSSLIGTAMELLRIPALLVYSLRLC). Residues 591 to 610 (FAKSKAECIHVKISQAYEFQ) lie on the Cytoplasmic side of the membrane. Residues 611–629 (FGLEYAWTMCIFSVSMTYS) form a helical membrane-spanning segment. The Extracellular segment spans residues 630–632 (ITC). Residues 633 to 657 (PVIVPFGLLYLVLKHMVDRYNIYYA) traverse the membrane as a helical segment. Over 658–664 (YTPTKLN) the chain is Cytoplasmic. The chain crosses the membrane as a helical span at residues 665-693 (QRIHAAAISQVVVAPILCMFWLLFFSVLR). Topologically, residues 694 to 698 (LGPVQ) are extracellular. Residues 699 to 719 (PITLFTFITLLCSIAFSCFGF) form a helical membrane-spanning segment. The Cytoplasmic portion of the chain corresponds to 720–825 (CMKKLRADRS…LLMDSPVAFQ (106 aa)). The interval 777–825 (SPAHQSYGTMVNSQSSVRDAEEDEEKDLEETLETELKDDLLMDSPVAFQ) is disordered. Residues 779 to 793 (AHQSYGTMVNSQSSV) are compositionally biased toward polar residues. A compositionally biased stretch (acidic residues) spans 796-809 (AEEDEEKDLEETLE).

Belongs to the CSC1 (TC 1.A.17) family. Monomer.

Its subcellular location is the endoplasmic reticulum membrane. The protein localises to the cell membrane. It carries out the reaction Ca(2+)(in) = Ca(2+)(out). Its function is as follows. Acts as an osmosensitive cation channel preferentially activated upon hypotonic stress. In contrast to tmem63b, does not show phospholipid scramblase activity. Required for the functional integrity of the kidney glomerular filtration barrier. This Danio rerio (Zebrafish) protein is Osmosensitive cation channel TMEM63C (tmem63c).